Here is a 600-residue protein sequence, read N- to C-terminus: Elongation factor 4 (600 aa).

The 183-residue stretch at Ser-5–Lys-187 folds into the tr-type G domain. GTP is bound by residues Asp-17 to Thr-22 and Asn-134 to Asp-137.

It belongs to the TRAFAC class translation factor GTPase superfamily. Classic translation factor GTPase family. LepA subfamily.

Its subcellular location is the cell inner membrane. The enzyme catalyses GTP + H2O = GDP + phosphate + H(+). In terms of biological role, required for accurate and efficient protein synthesis under certain stress conditions. May act as a fidelity factor of the translation reaction, by catalyzing a one-codon backward translocation of tRNAs on improperly translocated ribosomes. Back-translocation proceeds from a post-translocation (POST) complex to a pre-translocation (PRE) complex, thus giving elongation factor G a second chance to translocate the tRNAs correctly. Binds to ribosomes in a GTP-dependent manner. This Marinobacter nauticus (strain ATCC 700491 / DSM 11845 / VT8) (Marinobacter aquaeolei) protein is Elongation factor 4.